An 89-amino-acid polypeptide reads, in one-letter code: Small ribosomal subunit protein bS20 (89 aa).

The disordered stretch occupies residues 1-28 (MTLANIKSAKKRAVQSEKRRQHNASQRS).

The protein belongs to the bacterial ribosomal protein bS20 family.

Binds directly to 16S ribosomal RNA. The sequence is that of Small ribosomal subunit protein bS20 from Haemophilus ducreyi (strain 35000HP / ATCC 700724).